The following is a 221-amino-acid chain: Ribosomal RNA large subunit methyltransferase E (221 aa).

Residues Gly-60, Trp-62, Asp-89, Asp-105, and Asp-134 each coordinate S-adenosyl-L-methionine. Catalysis depends on Lys-174, which acts as the Proton acceptor. Residues 199 to 221 (KPKASRDKSSETFLLGRQLKHPG) are disordered.

It belongs to the class I-like SAM-binding methyltransferase superfamily. RNA methyltransferase RlmE family.

It localises to the cytoplasm. It catalyses the reaction uridine(2552) in 23S rRNA + S-adenosyl-L-methionine = 2'-O-methyluridine(2552) in 23S rRNA + S-adenosyl-L-homocysteine + H(+). Functionally, specifically methylates the uridine in position 2552 of 23S rRNA at the 2'-O position of the ribose in the fully assembled 50S ribosomal subunit. In Ralstonia nicotianae (strain ATCC BAA-1114 / GMI1000) (Ralstonia solanacearum), this protein is Ribosomal RNA large subunit methyltransferase E.